Reading from the N-terminus, the 135-residue chain is Sex-regulated protein janus-A (135 aa).

Lys-37 contacts substrate. Catalysis depends on His-63, which acts as the Proton acceptor. 104 to 106 (SQG) lines the substrate pocket.

This sequence belongs to the janus family. In terms of tissue distribution, somatic and germline cells. Isoform B is expressed in both sexes and in somatic and germ line cells. Isoform A is expressed in males and is germ line specific.

Its function is as follows. JanA and janB regulate somatic sex differentiation. The polypeptide is Sex-regulated protein janus-A (janA) (Drosophila melanogaster (Fruit fly)).